Consider the following 901-residue polypeptide: HTH-type transcriptional regulator MalT (901 aa).

Position 39-46 (39-46 (SPAGYGKT)) interacts with ATP. The 66-residue stretch at 829–894 (ELIRTSPLTQ…DAVQHAQQLL (66 aa)) folds into the HTH luxR-type domain. The segment at residues 853–872 (NEQIAGELAVAATTIKTHIR) is a DNA-binding region (H-T-H motif).

The protein belongs to the MalT family. Monomer in solution. Oligomerizes to an active state in the presence of the positive effectors ATP and maltotriose.

Its activity is regulated as follows. Activated by ATP and maltotriose, which are both required for DNA binding. Its function is as follows. Positively regulates the transcription of the maltose regulon whose gene products are responsible for uptake and catabolism of malto-oligosaccharides. Specifically binds to the promoter region of its target genes, recognizing a short DNA motif called the MalT box. The chain is HTH-type transcriptional regulator MalT from Salmonella agona (strain SL483).